We begin with the raw amino-acid sequence, 568 residues long: 2-succinyl-5-enolpyruvyl-6-hydroxy-3-cyclohexene-1-carboxylate synthase (568 aa).

Belongs to the TPP enzyme family. MenD subfamily. In terms of assembly, homodimer. The cofactor is Mg(2+). Mn(2+) is required as a cofactor. It depends on thiamine diphosphate as a cofactor.

The catalysed reaction is isochorismate + 2-oxoglutarate + H(+) = 5-enolpyruvoyl-6-hydroxy-2-succinyl-cyclohex-3-ene-1-carboxylate + CO2. The protein operates within quinol/quinone metabolism; 1,4-dihydroxy-2-naphthoate biosynthesis; 1,4-dihydroxy-2-naphthoate from chorismate: step 2/7. It participates in quinol/quinone metabolism; menaquinone biosynthesis. Catalyzes the thiamine diphosphate-dependent decarboxylation of 2-oxoglutarate and the subsequent addition of the resulting succinic semialdehyde-thiamine pyrophosphate anion to isochorismate to yield 2-succinyl-5-enolpyruvyl-6-hydroxy-3-cyclohexene-1-carboxylate (SEPHCHC). The polypeptide is 2-succinyl-5-enolpyruvyl-6-hydroxy-3-cyclohexene-1-carboxylate synthase (Haemophilus influenzae (strain 86-028NP)).